We begin with the raw amino-acid sequence, 1373 residues long: Capping protein, Arp2/3 and myosin-I linker protein 3 (1373 aa).

Positions 126–151 (RGNADTPEGPRDTSPNSETSTSTTHS) are disordered. The span at 138 to 151 (TSPNSETSTSTTHS) shows a compositional bias: low complexity. LRR repeat units follow at residues 242–269 (SGSLEELVLDNAGLKTDFVQKLAGVFGE), 272–299 (SCVLHALTLSHNPIEDKGFLSLSQQLLC), 333–358 (ASSLRYLDLSKNPGLLATDEANALYS), 390–417 (CSHLTYLNLARNSCSHRKGREAPPAFKQ), 422–446 (AYTLSHVNLSATRLPLEALRALLQG), 453–475 (LSDLHLDLSSCELRSAGAQALQE), 480–507 (VTCIGSLDLSDNGFDSDLLTLVPALGKN), 510–536 (LKHLFLGKNFNVKAKTLEEILHKLVQL), 541–564 (DCSLQSLSVADSRLKLRTSILINA), and 568–591 (NTCLAKVDLSGNGMEDIGAKMLSK). 2 disordered regions span residues 864–902 (RTLSDPPGGAGPGQDPSSRGRGRSHDHEETDDELGTNID) and 970–1373 (LRHQ…PGTD). Over residues 981 to 997 (PRTTPPGPGRPSVPVPG) the composition is skewed to pro residues. Positions 1007 to 1022 (RLDEGLEDFFSRRVMD) are enriched in basic and acidic residues. The segment covering 1047-1062 (QKRRRRGLFHFRRPRS) has biased composition (basic residues). The segment covering 1078–1097 (LPPPPPPPPTQESPPSPDPP) has biased composition (pro residues). A compositionally biased stretch (low complexity) spans 1098 to 1108 (SLGNNSSPCWS). Positions 1218–1228 (RRAEATWHIAE) are enriched in basic and acidic residues. The span at 1232 to 1243 (PNHSCQSPSPAS) shows a compositional bias: polar residues. Residues 1269–1278 (PIGPRPPKPV) show a composition bias toward pro residues. Basic and acidic residues predominate over residues 1345–1358 (QSCDKLEPDRRRPP).

Belongs to the CARMIL family. As to expression, widely expressed, with much higher levels in fetal tissues than in adult ones. Highly expressed in newborn brain.

The protein localises to the cytoplasm. It localises to the cell membrane. The polypeptide is Capping protein, Arp2/3 and myosin-I linker protein 3 (Carmil3) (Rattus norvegicus (Rat)).